Reading from the N-terminus, the 329-residue chain is Sideroflexin-1.1 (329 aa).

5 helical membrane-spanning segments follow: residues methionine 100 to phenylalanine 122, leucine 150 to glycine 167, leucine 178 to methionine 198, valine 232 to isoleucine 254, and isoleucine 274 to phenylalanine 294.

The protein belongs to the sideroflexin family.

It localises to the mitochondrion inner membrane. It catalyses the reaction L-serine(in) = L-serine(out). The enzyme catalyses L-alanine(in) = L-alanine(out). It carries out the reaction L-cysteine(in) = L-cysteine(out). Its function is as follows. Amino acid transporter importing serine, an essential substrate of the mitochondrial branch of the one-carbon pathway, into mitochondria. Mitochondrial serine is then converted to glycine and formate, which exits to the cytosol where it is used to generate the charged folates that serve as one-carbon donors. May also transport other amino acids including alanine and cysteine. The protein is Sideroflexin-1.1 of Caenorhabditis elegans.